The primary structure comprises 479 residues: Cell division protein FtsA (479 aa).

A disordered region spans residues 417–458 (QGRQTERKENEQRDNTDRQREDTPKQTVKKKEKTGPSFGDKL). A compositionally biased stretch (basic and acidic residues) spans 420–440 (QTERKENEQRDNTDRQREDTP).

Belongs to the FtsA/MreB family. Self-interacts. Interacts with FtsZ.

Its subcellular location is the cell inner membrane. Cell division protein that is involved in the assembly of the Z ring. May serve as a membrane anchor for the Z ring. In Porphyromonas gingivalis (strain ATCC BAA-308 / W83), this protein is Cell division protein FtsA.